A 345-amino-acid chain; its full sequence is Short-wave-sensitive opsin 1 (345 aa).

Topologically, residues 1–30 (MSEEEFYLFKNISSVGPWDGPQYHIAPVWA) are extracellular. N11 is a glycosylation site (N-linked (GlcNAc...) asparagine). Residues 31 to 55 (FYLQAAFMGTVFLIGFPLNAMVLVA) traverse the membrane as a helical segment. Residues 56–67 (TLRYKKLRQPLN) lie on the Cytoplasmic side of the membrane. A helical membrane pass occupies residues 68-93 (YILVNVSFGGFLLCIFSVFPVFVASC). The Extracellular portion of the chain corresponds to 94-107 (NGYFVFGRHVCALE). A disulfide bridge links C104 with C181. A helical transmembrane segment spans residues 108–127 (GFLGTVAGLVTGWSLAFLAF). Over 128-146 (ERYIVICKPFGNFRFSSKH) the chain is Cytoplasmic. A helical transmembrane segment spans residues 147-170 (ALTVVLATWTIGIGVSIPPFFGWS). At 171–196 (RFIPEGLQCSCGPDWYTVGTKYRSES) the chain is on the extracellular side. A helical transmembrane segment spans residues 197–224 (YTWFLFIFCFIVPLSLICFSYTQLLRAL). Over 225–246 (KAVAAQQQESATTQKAEREVSR) the chain is Cytoplasmic. A helical membrane pass occupies residues 247 to 270 (MVVVMVGSFCVCYVPYAAFAMYMV). Over 271 to 278 (NNRNHGLD) the chain is Extracellular. Residues 279-303 (LRLVTIPSFFSKSACIYNPIIYCFM) traverse the membrane as a helical segment. Position 290 is an N6-(retinylidene)lysine (K290). At 304–345 (NKQFQACIMKMVCGKAMTDESDTCSSQKTEVSTVSSTQVGPN) the chain is on the cytoplasmic side.

Belongs to the G-protein coupled receptor 1 family. Opsin subfamily. In terms of processing, phosphorylated on some or all of the serine and threonine residues present in the C-terminal region. In terms of tissue distribution, the three color pigments are found in the cone photoreceptor cells. Expressed throughout the epidermis and dermis, primarily in the stratum granulosum in the facial and abdominal skin (at protein level). Expressed in dermal fibroblasts (at protein level). Expressed in melanocytes (at protein level).

The protein localises to the cell membrane. It localises to the photoreceptor inner segment. It is found in the cell projection. Its subcellular location is the cilium. The protein resides in the photoreceptor outer segment. The protein localises to the cytoplasm. It localises to the perinuclear region. In terms of biological role, visual pigments are the light-absorbing molecules that mediate vision. They consist of an apoprotein, opsin, covalently linked to cis-retinal. Required for the maintenance of cone outer segment organization in the ventral retina, but not essential for the maintenance of functioning cone photoreceptors. Involved in ensuring correct abundance and localization of retinal membrane proteins. May increase spectral sensitivity in dim light. The sequence is that of Short-wave-sensitive opsin 1 (OPN1SW) from Homo sapiens (Human).